The chain runs to 552 residues: Hydroxylamine reductase (552 aa).

[2Fe-2S] cluster-binding residues include C5, C8, C20, and C27. H251, E275, C319, C407, C435, C460, E494, and K496 together coordinate hybrid [4Fe-2O-2S] cluster. Position 407 is a cysteine persulfide (C407).

Belongs to the HCP family. [2Fe-2S] cluster is required as a cofactor. Requires hybrid [4Fe-2O-2S] cluster as cofactor.

The protein resides in the cytoplasm. The catalysed reaction is A + NH4(+) + H2O = hydroxylamine + AH2 + H(+). In terms of biological role, catalyzes the reduction of hydroxylamine to form NH(3) and H(2)O. This chain is Hydroxylamine reductase, found in Shigella sonnei (strain Ss046).